The following is a 455-amino-acid chain: MSNRGRQPSGPPPSRKRETKWSGKPKRYANFGAQSFDTVITGHLTQEQLDAYQRYFRIEEISNFLSVAKQQHKSIVDVLPSAKVDETDHYKRDPSPPPKYDKNGNRTNTRERRVTEALEKERHELVELAASSIKNYMIPSNYRRPSRTVERLYVPVKDYPDINFVGFLIGPRGNTLKKLQEDSGARLQIRGKGSVKEGKSSDGFGSSQTGTDIQDDLHVLITADSPLKISKAVKLVNEIIDKLIFSPQGMNFMKRDQLKELAVLNGTLRETKPFDPEAHEKKQQQQMDITKIVCKICGNIGHIARDCKQNNGKRPLDDNAENEPTTINKKARTDVPPPPPPPPPPAPPSSSTEISKQVPPPPPPPPPPAPSAAASGFATTENYKQGLVPPPPPPPPPPPPPVRSALVNFENNSKVLLTKEKEESGSSELKNTGESSSSSSGVPPSPPPPSSNVPR.

Disordered stretches follow at residues 1-28, 86-110, 189-210, and 305-455; these read MSNRGRQPSGPPPSRKRETKWSGKPKRY, ETDHYKRDPSPPPKYDKNGNRTNTR, IRGKGSVKEGKSSDGFGSSQTG, and RDCK…NVPR. Residues 153–236 form the KH domain; that stretch reads YVPVKDYPDI…LKISKAVKLV (84 aa). A CCHC-type zinc finger spans residues 292 to 309; sequence IVCKICGNIGHIARDCKQ. 3 stretches are compositionally biased toward pro residues: residues 335-348, 358-370, and 388-402; these read VPPPPPPPPPPAPP, VPPPPPPPPPPAP, and VPPPPPPPPPPPPPV. Positions 426-442 are enriched in low complexity; that stretch reads SSELKNTGESSSSSSGV. Positions 443 to 455 are enriched in pro residues; that stretch reads PPSPPPPSSNVPR.

Belongs to the BBP/SF1 family.

The protein resides in the nucleus. Its function is as follows. Necessary for the splicing of pre-mRNA. Has a role in the recognition of the branch site (5'-UACUAAC-3'), the pyrimidine tract and the 3'-splice site at the 3'-end of introns. The sequence is that of Branchpoint-bridging protein (BBP) from Candida albicans (strain SC5314 / ATCC MYA-2876) (Yeast).